The chain runs to 363 residues: Anhydro-N-acetylmuramic acid kinase (363 aa).

10–17 (GTSLDGMD) serves as a coordination point for ATP.

It belongs to the anhydro-N-acetylmuramic acid kinase family.

The enzyme catalyses 1,6-anhydro-N-acetyl-beta-muramate + ATP + H2O = N-acetyl-D-muramate 6-phosphate + ADP + H(+). The protein operates within amino-sugar metabolism; 1,6-anhydro-N-acetylmuramate degradation. Its pathway is cell wall biogenesis; peptidoglycan recycling. Functionally, catalyzes the specific phosphorylation of 1,6-anhydro-N-acetylmuramic acid (anhMurNAc) with the simultaneous cleavage of the 1,6-anhydro ring, generating MurNAc-6-P. Is required for the utilization of anhMurNAc either imported from the medium or derived from its own cell wall murein, and thus plays a role in cell wall recycling. Contributes to intrinsic fosfomycin resistance in P.aeruginosa. The protein is Anhydro-N-acetylmuramic acid kinase of Pseudomonas aeruginosa (strain ATCC 15692 / DSM 22644 / CIP 104116 / JCM 14847 / LMG 12228 / 1C / PRS 101 / PAO1).